We begin with the raw amino-acid sequence, 500 residues long: Chromosomal replication initiator protein DnaA (500 aa).

The tract at residues 1-81 is domain I, interacts with DnaA modulators; sequence MVNASGDPVI…LQALRTVTGE (81 aa). A domain II region spans residues 81–155; the sequence is ENMFPAFKVV…QQKMNRDPET (75 aa). Positions 156–377 are domain III, AAA+ region; that stretch reads HLNKNFTFDS…GALTRVTAVA (222 aa). The ATP site is built by Gly200, Gly202, Lys203, and Thr204. Positions 378-500 are domain IV, binds dsDNA; sequence SLSNQPVTRA…TVRLKQSNTN (123 aa).

The protein belongs to the DnaA family. In terms of assembly, oligomerizes as a right-handed, spiral filament on DNA at oriC.

The protein resides in the cytoplasm. Plays an essential role in the initiation and regulation of chromosomal replication. ATP-DnaA binds to the origin of replication (oriC) to initiate formation of the DNA replication initiation complex once per cell cycle. Binds the DnaA box (a 9 base pair repeat at the origin) and separates the double-stranded (ds)DNA. Forms a right-handed helical filament on oriC DNA; dsDNA binds to the exterior of the filament while single-stranded (ss)DNA is stabiized in the filament's interior. The ATP-DnaA-oriC complex binds and stabilizes one strand of the AT-rich DNA unwinding element (DUE), permitting loading of DNA polymerase. After initiation quickly degrades to an ADP-DnaA complex that is not apt for DNA replication. Binds acidic phospholipids. The chain is Chromosomal replication initiator protein DnaA from Bifidobacterium longum (strain DJO10A).